The primary structure comprises 444 residues: Enolase 2 (444 aa).

Residues histidine 165 and glutamate 174 each contribute to the substrate site. Residue glutamate 217 is the Proton donor of the active site. Mg(2+) is bound by residues aspartate 252, glutamate 303, and aspartate 330. The substrate site is built by glutamate 303 and aspartate 330. The active-site Proton acceptor is lysine 355. Residues 382–385 (SHRS) and lysine 406 contribute to the substrate site.

This sequence belongs to the enolase family. As to quaternary structure, homodimer. The cofactor is Mg(2+).

The protein resides in the cytoplasm. It carries out the reaction (2R)-2-phosphoglycerate = phosphoenolpyruvate + H2O. The protein operates within carbohydrate degradation; glycolysis; pyruvate from D-glyceraldehyde 3-phosphate: step 4/5. The polypeptide is Enolase 2 (ENO2) (Toxoplasma gondii).